The primary structure comprises 118 residues: Small ribosomal subunit protein uS13 (118 aa).

The disordered stretch occupies residues serine 94–lysine 118.

Belongs to the universal ribosomal protein uS13 family. Part of the 30S ribosomal subunit. Forms a loose heterodimer with protein S19. Forms two bridges to the 50S subunit in the 70S ribosome.

In terms of biological role, located at the top of the head of the 30S subunit, it contacts several helices of the 16S rRNA. In the 70S ribosome it contacts the 23S rRNA (bridge B1a) and protein L5 of the 50S subunit (bridge B1b), connecting the 2 subunits; these bridges are implicated in subunit movement. Contacts the tRNAs in the A and P-sites. The chain is Small ribosomal subunit protein uS13 from Idiomarina loihiensis (strain ATCC BAA-735 / DSM 15497 / L2-TR).